We begin with the raw amino-acid sequence, 433 residues long: Myricetin 3-O-glucosyl 1,2-rhamnoside 6'-O-caffeoyltransferase AT2 (433 aa).

Residues His157 and Asp375 each act as proton acceptor in the active site.

This sequence belongs to the plant acyltransferase family. As to expression, expressed in young cromes.

It carries out the reaction myricetin 3-O-[beta-D-glucosyl-(1-&gt;2)-alpha-L-rhamnoside] + (E)-caffeoyl-CoA = myricetin 3-O-[(6-O-(E)-caffeoyl-beta-D-glucosyl)-(1-&gt;2)-alpha-L-rhamnoside] + CoA. Its pathway is flavonoid metabolism. Functionally, caffeoyltransferase involved in montbretin A (MbA) biosynthesis. Catalyzes the caffeoylation of myricetin 3-O-beta-D-glucosyl 1,2-alpha-L-rhamnoside (MRG) to produce myricetin 3-O-(6'-O-caffeoyl)-beta-D-glucosyl 1,2-alpha-L-rhamnoside (mini-MbA), a precursor of MbA. Mini-MbA and MbA are potent inhibitors of human pancreatic alpha-amylase and are being developed as drug candidates to treat type-2 diabetes. In vitro, is able to catalyze the caffeoylation of quercetin 3-O-sophoroside (QGG), although QGG may not be a physiological substrate in vivo. In vitro, can use coumaryl-CoA, feruloyl-CoA and acetyl-CoA, although these three acyl donors may not be physiological in vivo. The chain is Myricetin 3-O-glucosyl 1,2-rhamnoside 6'-O-caffeoyltransferase AT2 from Crocosmia x crocosmiiflora (Montbretia).